The chain runs to 506 residues: MITLTPGHLTLPQLRQIAREPVQLTLDPASFAKIDAGAKAVSDIAAKGEPAYGINTGFGRLASTHIPHDQLELLQKNLVLSHAVGVGEPMARSSVRLLIALKLSSLGRGHSGIRREVMDALIKLFNADVLPLIPVKGSVGASGDLAPLAHMSAVLLGVGEVFIRGERASAVDGLRVAGLAPLTLQAKEGLALLNGTQASTALALDNLFAIEDLYRTALVAGALSVDAAAGSVKPFDARIHELRGHRGQIDAAAAYRELLEGSAINLSHRDCGKVQDPYSLRCQPQVMGACLDQMRHAADVLLVEANAVSDNPLIFPDTGEVLSGGNFHAEPVAFAADNLALAAAEIGALAERRIALLIDATLSGLPPFLVKDGGVNSGFMIAHVTAAALASENKTLAHPASVDSLPTSANQEDHVSMATFAARKLADIADNTKHILAIELLAAAQGVDLRENETSPKLAEVMKTIRSKVAHYELDHYFAPDIAVIAKLVVERAFAKHCPFAFASEQ.

The 5-imidazolinone (Ala-Gly) cross-link spans 141–143 (ASG). Position 142 is a 2,3-didehydroalanine (Ser) (serine 142).

It belongs to the PAL/histidase family. Post-translationally, contains an active site 4-methylidene-imidazol-5-one (MIO), which is formed autocatalytically by cyclization and dehydration of residues Ala-Ser-Gly.

Its subcellular location is the cytoplasm. It carries out the reaction L-histidine = trans-urocanate + NH4(+). The protein operates within amino-acid degradation; L-histidine degradation into L-glutamate; N-formimidoyl-L-glutamate from L-histidine: step 1/3. The polypeptide is Histidine ammonia-lyase (Burkholderia multivorans (strain ATCC 17616 / 249)).